A 357-amino-acid polypeptide reads, in one-letter code: Neutral protease 2 homolog BDCG_00922 (357 aa).

Positions Met1–Ala19 are cleaved as a signal peptide. The propeptide occupies Gly20–Arg182. Cystine bridges form between Cys188–Cys259, Cys266–Cys284, and Cys297–Cys357. A Zn(2+)-binding site is contributed by His308. The active site involves Glu309. His312 and Asp323 together coordinate Zn(2+).

This sequence belongs to the peptidase M35 family. Zn(2+) serves as cofactor.

The protein resides in the secreted. The catalysed reaction is Preferential cleavage of bonds with hydrophobic residues in P1'. Also 3-Asn-|-Gln-4 and 8-Gly-|-Ser-9 bonds in insulin B chain.. Functionally, secreted metalloproteinase that allows assimilation of proteinaceous substrates. Shows high activities on basic nuclear substrates such as histone and protamine. The sequence is that of Neutral protease 2 homolog BDCG_00922 from Ajellomyces dermatitidis (strain ER-3 / ATCC MYA-2586) (Blastomyces dermatitidis).